Consider the following 1384-residue polypeptide: CHD3-type chromatin-remodeling factor PICKLE (1384 aa).

S23 carries the post-translational modification Phosphoserine. The PHD-type zinc finger occupies 49–96 (ENACQACGESTNLVSCNTCTYAFHAKCLVPPLKDASVENWRCPECVSP). 2 Chromo domains span residues 98 to 180 (NEID…NSED) and 190 to 249 (TTVD…RSKD). Residues 285–471 (RFSWSKQTHV…FMLMHFLDAG (187 aa)) enclose the Helicase ATP-binding domain. 298–305 (DEMGLGKT) contributes to the ATP binding site. The short motif at 376–383 (KKKKSGQI) is the Nuclear localization signal element. Residues 422–425 (DEGH) carry the DEAH box motif. The Helicase C-terminal domain occupies 599–760 (LLDKMMVKLK…NINQEELDDI (162 aa)). The segment covering 893 to 912 (AGLEDVSSDGDESYEAESTD) has biased composition (acidic residues). 4 disordered regions span residues 893 to 941 (AGLE…TPLM), 1122 to 1152 (GLQG…NNNA), 1313 to 1344 (SDQS…PLRG), and 1365 to 1384 (VDVK…MVVD). The span at 1138–1152 (TNQNPGSVITGNNNA) shows a compositional bias: polar residues. Basic and acidic residues-rich tracts occupy residues 1316–1341 (SKSH…ETKP) and 1367–1384 (VKME…MVVD).

Belongs to the SNF2/RAD54 helicase family. Interacts with TAF12B. Mostly expressed in tissue undergoing significant differentiation (meristems and primordia) such as young seedlings, influorescent tissue and young siliques, but not in endosperm and seed coat (at protein level). Levels decrease as organs age. Also present in trichomes.

The protein resides in the nucleus. Its function is as follows. Chromatin remodeling factor that represses the expression of embryonic trait genes (such as NFYB9/LEC1) upon and after seed germination and thus enables the developmental switch to post-germinative growth. Silences some MADS-box proteins such as PHE1 and PHE2. Plays a role during carpel differentiation. Regulates late processes in cytokinin signaling. The chain is CHD3-type chromatin-remodeling factor PICKLE (PKL) from Arabidopsis thaliana (Mouse-ear cress).